We begin with the raw amino-acid sequence, 148 residues long: Cuticle protein CP1499 (148 aa).

In terms of tissue distribution, calcified shell.

This chain is Cuticle protein CP1499, found in Cancer pagurus (Rock crab).